A 62-amino-acid chain; its full sequence is Large ribosomal subunit protein uL30 (62 aa).

Belongs to the universal ribosomal protein uL30 family. As to quaternary structure, part of the 50S ribosomal subunit.

The chain is Large ribosomal subunit protein uL30 from Polynucleobacter asymbioticus (strain DSM 18221 / CIP 109841 / QLW-P1DMWA-1) (Polynucleobacter necessarius subsp. asymbioticus).